The following is a 232-amino-acid chain: Phosphatidylserine decarboxylase proenzyme (232 aa).

S190 functions as the Schiff-base intermediate with substrate; via pyruvic acid in the catalytic mechanism. S190 is subject to Pyruvic acid (Ser); by autocatalysis.

Belongs to the phosphatidylserine decarboxylase family. PSD-A subfamily. As to quaternary structure, heterodimer of a large membrane-associated beta subunit and a small pyruvoyl-containing alpha subunit. It depends on pyruvate as a cofactor. Post-translationally, is synthesized initially as an inactive proenzyme. Formation of the active enzyme involves a self-maturation process in which the active site pyruvoyl group is generated from an internal serine residue via an autocatalytic post-translational modification. Two non-identical subunits are generated from the proenzyme in this reaction, and the pyruvate is formed at the N-terminus of the alpha chain, which is derived from the carboxyl end of the proenzyme. The post-translation cleavage follows an unusual pathway, termed non-hydrolytic serinolysis, in which the side chain hydroxyl group of the serine supplies its oxygen atom to form the C-terminus of the beta chain, while the remainder of the serine residue undergoes an oxidative deamination to produce ammonia and the pyruvoyl prosthetic group on the alpha chain.

The protein localises to the cell membrane. The catalysed reaction is a 1,2-diacyl-sn-glycero-3-phospho-L-serine + H(+) = a 1,2-diacyl-sn-glycero-3-phosphoethanolamine + CO2. It participates in phospholipid metabolism; phosphatidylethanolamine biosynthesis; phosphatidylethanolamine from CDP-diacylglycerol: step 2/2. In terms of biological role, catalyzes the formation of phosphatidylethanolamine (PtdEtn) from phosphatidylserine (PtdSer). This is Phosphatidylserine decarboxylase proenzyme from Brucella canis (strain ATCC 23365 / NCTC 10854 / RM-666).